An 805-amino-acid polypeptide reads, in one-letter code: Phosphoinositide 3-kinase adapter protein 1 (805 aa).

The 138-residue stretch at 8–145 (RGCDILIVYS…AVKKAISEDS (138 aa)) folds into the TIR domain. The necessary and sufficient to mediate inhibition of NF-kappa-B downstream of activated TLRs; may mediate interaction with MYD88 and TIRAP stretch occupies residues 10–144 (CDILIVYSPD…AAVKKAISED (135 aa)). The interval 145 to 165 (SGCDSVTDTEPEDEKVVSYSK) is disordered. One can recognise a DBB domain in the interval 181–317 (VQPDRIRCGA…NIPASGLHLF (137 aa)). A Phosphotyrosine modification is found at Y263. Phosphotyrosine; by SYK occurs at positions 419, 444, and 459. Y513 bears the Phosphotyrosine; by ABL1 mark. Residues 527–547 (ASRPPVPVPRPETTAPGAHQL) are disordered. Phosphotyrosine; by ABL1 is present on residues Y553 and Y570. The segment at 571-590 (VSSESIRKGPPVRPWRDRPQ) is disordered. Y594 carries the phosphotyrosine; by ABL1 modification. S642 is modified (phosphoserine). Positions 645-667 (FQQENLKRLRDSITRRQREKQKS) form a coiled coil. Positions 654 to 672 (RDSITRRQREKQKSGKQTD) are enriched in basic and acidic residues. A disordered region spans residues 654 to 679 (RDSITRRQREKQKSGKQTDLEITVPI). Y694 carries the post-translational modification Phosphotyrosine; by ABL1. A disordered region spans residues 697–805 (GPRKSVIPPR…PPPPVPPRGR (109 aa)). The segment covering 707–716 (TELRRGDWKT) has biased composition (basic and acidic residues). The segment covering 717–740 (DSTSSTASSTSNRSSTRSLLSVSS) has biased composition (low complexity). S718 is modified (phosphoserine). A compositionally biased stretch (pro residues) spans 795 to 805 (HPPPPVPPRGR).

Homooligomer. Interacts (phosphorylated on tyrosine residues within YXXM motifs) with PIK3R1 (via SH2 domain); required for BCR- and TLR-mediated activation of phosphoinositide 3-kinase. Interacts (via polyproline C-terminal region) with ABI1 (via SH3 domain); the interaction promotes phosphorylation of PIK3AP1 by ABL1. May interact with MYD88 and TIRAP. Post-translationally, constitutively phosphorylated. Phosphorylated on tyrosine residues in C-terminal region by ABL1. Phosphorylated on tyrosine residues within the YXXM motifs by BTK and SYK. Isoform 1 and isoform 2 are phosphorylated on tyrosine residues, most likely within the YXXM motifs, via CD19 activation. Toll-like receptor activation induces appearance of a phosphorylated form associated with membranes. Expressed in natural killer (NK) cells.

Its subcellular location is the cytoplasm. The protein resides in the cell membrane. Its function is as follows. Signaling adapter that contributes to B-cell development by linking B-cell receptor (BCR) signaling to the phosphoinositide 3-kinase (PI3K)-Akt signaling pathway. Has a complementary role to the BCR coreceptor CD19, coupling BCR and PI3K activation by providing a docking site for the PI3K subunit PIK3R1. Alternatively, links Toll-like receptor (TLR) signaling to PI3K activation, a process preventing excessive inflammatory cytokine production. Also involved in the activation of PI3K in natural killer cells. May be involved in the survival of mature B-cells via activation of REL. In Homo sapiens (Human), this protein is Phosphoinositide 3-kinase adapter protein 1 (PIK3AP1).